Reading from the N-terminus, the 346-residue chain is Dihydroorotase (346 aa).

Zn(2+) contacts are provided by His-14 and His-16. Substrate is bound by residues 16-18 (HLR) and Asn-42. Residues Lys-100, His-137, and His-175 each coordinate Zn(2+). N6-carboxylysine is present on Lys-100. His-137 provides a ligand contact to substrate. Leu-220 is a substrate binding site. Residue Asp-248 coordinates Zn(2+). Asp-248 is a catalytic residue. Positions 252 and 264 each coordinate substrate.

Belongs to the metallo-dependent hydrolases superfamily. DHOase family. Class II DHOase subfamily. Homodimer. It depends on Zn(2+) as a cofactor.

It carries out the reaction (S)-dihydroorotate + H2O = N-carbamoyl-L-aspartate + H(+). Its pathway is pyrimidine metabolism; UMP biosynthesis via de novo pathway; (S)-dihydroorotate from bicarbonate: step 3/3. In terms of biological role, catalyzes the reversible cyclization of carbamoyl aspartate to dihydroorotate. This Cereibacter sphaeroides (strain ATCC 17025 / ATH 2.4.3) (Rhodobacter sphaeroides) protein is Dihydroorotase.